The chain runs to 118 residues: Large ribosomal subunit protein uL24 (118 aa).

The protein belongs to the universal ribosomal protein uL24 family. As to quaternary structure, part of the 50S ribosomal subunit.

Its function is as follows. One of two assembly initiator proteins, it binds directly to the 5'-end of the 23S rRNA, where it nucleates assembly of the 50S subunit. In terms of biological role, one of the proteins that surrounds the polypeptide exit tunnel on the outside of the subunit. This chain is Large ribosomal subunit protein uL24, found in Prochlorococcus marinus (strain AS9601).